Consider the following 1340-residue polypeptide: Early transcription factor large subunit homolog (1340 aa).

Belongs to the asfivirus G1340L family.

Its subcellular location is the virion. In terms of biological role, putative initation factor. The chain is Early transcription factor large subunit homolog from African swine fever virus (strain Badajoz 1971 Vero-adapted) (Ba71V).